Reading from the N-terminus, the 155-residue chain is Ribosomal RNA large subunit methyltransferase H (155 aa).

S-adenosyl-L-methionine is bound by residues L72, G104, and 123-128; that span reads LAKITL.

Belongs to the RNA methyltransferase RlmH family. In terms of assembly, homodimer.

It is found in the cytoplasm. The enzyme catalyses pseudouridine(1915) in 23S rRNA + S-adenosyl-L-methionine = N(3)-methylpseudouridine(1915) in 23S rRNA + S-adenosyl-L-homocysteine + H(+). In terms of biological role, specifically methylates the pseudouridine at position 1915 (m3Psi1915) in 23S rRNA. The polypeptide is Ribosomal RNA large subunit methyltransferase H (Mycoplasma capricolum subsp. capricolum (strain California kid / ATCC 27343 / NCTC 10154)).